Here is a 1184-residue protein sequence, read N- to C-terminus: Protocadherin-12 (1184 aa).

The N-terminal stretch at 1–24 (MMQLLQLLLGLLGPGGYLFLLGDC) is a signal peptide. The Extracellular segment spans residues 25-718 (QEVTTLTVKY…PGALSMSMLT (694 aa)). Cadherin domains follow at residues 28–135 (TTLT…QPRF), 136–244 (PKGE…SPAF), 245–352 (AESS…IPSI), 355–460 (TWAS…APVF), and 461–565 (EKSR…APEV). Asn415 carries N-linked (GlcNAc...) asparagine glycosylation. Asn582, Asn659, and Asn662 each carry an N-linked (GlcNAc...) asparagine glycan. Residues 600–711 (PAGTDTPPLA…LRDSARKPGA (112 aa)) enclose the Cadherin 6 domain. The chain crosses the membrane as a helical span at residues 719–739 (VICLAVLLGIFGLILALFMSI). Residues 740–1184 (CRTEKKDNRA…RGSSSSSRCL (445 aa)) lie on the Cytoplasmic side of the membrane. 2 disordered regions span residues 854-928 (RQRN…ESGP) and 973-1023 (QFQP…DPEE). Ser859 is modified (phosphoserine). Positions 1012–1023 (PEQEEGPLDPEE) are enriched in acidic residues. Ser1062 is modified (phosphoserine). Positions 1153 to 1184 (SAASGMKVQGDPGGKTGTEGKSRGSSSSSRCL) are disordered. Positions 1175–1184 (RGSSSSSRCL) are enriched in low complexity.

In terms of processing, cleaved by ADAM10 close to the transmembrane domain to release the Protocadherin-12, secreted form in the serum. Cleavage results in reduced cellular adhesion in a cell migration assay. In terms of tissue distribution, expressed in highly vascularized tissues including the heart and placenta, but most tissues contain a low level of expression. Prominent expression in the spleen. Present in villous and extravillous trophoblast (at protein level).

It is found in the cell membrane. The protein localises to the cell junction. Its subcellular location is the secreted. Its function is as follows. Cellular adhesion molecule that may play an important role in cell-cell interactions at interendothelial junctions. Acts as a regulator of cell migration, probably via increasing cell-cell adhesion. Promotes homotypic calcium-dependent aggregation and adhesion and clusters at intercellular junctions. Unable to bind to catenins, weakly associates with the cytoskeleton. The protein is Protocadherin-12 of Homo sapiens (Human).